The primary structure comprises 503 residues: Structure-specific endonuclease subunit EME2 (503 aa).

Composition is skewed to basic and acidic residues over residues 1–10 (METKQERETG), 38–48 (ETNKPQTESRK), and 112–135 (AEEKKRQRELKRQEKAQKKELEKI). The tract at residues 1-135 (METKQERETG…KAQKKELEKI (135 aa)) is disordered. The nuclease-like domain; forms the post-nick DNA binding interface and is involved in DNA recognition and bending stretch occupies residues 70–366 (QPDVEEKTKN…RPFRKHWEAQ (297 aa)). Positions 103–151 (EQVAAEQEQAEEKKRQRELKRQEKAQKKELEKIERERRKETNLALKLLR) form a coiled coil. Positions 388–503 (GLPLTWRRQI…NPELVLDLNS (116 aa)) are helix-hairpin-helix (2HhH); forms the pre-nick DNA binding interface and is involved in DNA recognition and bending.

The protein belongs to the EME1/MMS4 family. In terms of assembly, part of the heterodimeric MUS81-EME2 complex; the complex forms specifically during the DNA replication phase of the cell cycle.

The protein localises to the nucleus. Its function is as follows. Non-catalytic subunit of the structure-specific, heterodimeric DNA endonuclease MUS81-EME2 which is involved in the maintenance of genome stability. In the complex, EME2 is required for DNA cleavage, participating in DNA recognition and bending. MUS81-EME2 cleaves 3'-flaps and nicked Holliday junctions, and exhibit limited endonuclease activity with 5' flaps and nicked double-stranded DNAs. MUS81-EME2 which is active during the replication of DNA is more specifically involved in replication fork processing. Replication forks frequently encounter obstacles to their passage, including DNA base lesions, DNA interstrand cross-links, difficult-to-replicate sequences, transcription bubbles, or tightly bound proteins. One mechanism for the restart of a stalled replication fork involves nucleolytic cleavage mediated by the MUS81-EME2 endonuclease. By acting upon the stalled fork, MUS81-EME2 generates a DNA double-strand break (DSB) that can be repaired by homologous recombination, leading to the restoration of an active fork. MUS81-EME2 could also function in telomere maintenance. In Xenopus tropicalis (Western clawed frog), this protein is Structure-specific endonuclease subunit EME2 (eme2).